A 384-amino-acid chain; its full sequence is Putative 8-amino-7-oxononanoate synthase (384 aa).

A substrate-binding site is contributed by arginine 22. Glycine 109–tyrosine 110 is a binding site for pyridoxal 5'-phosphate. Position 134 (histidine 134) interacts with substrate. Residues serine 182, aspartate 207–histidine 210, and threonine 236–lysine 239 each bind pyridoxal 5'-phosphate. Residue lysine 239 is modified to N6-(pyridoxal phosphate)lysine. Threonine 348 contacts substrate.

This sequence belongs to the class-II pyridoxal-phosphate-dependent aminotransferase family. BioF subfamily. As to quaternary structure, homodimer. The cofactor is pyridoxal 5'-phosphate.

The catalysed reaction is 6-carboxyhexanoyl-[ACP] + L-alanine + H(+) = (8S)-8-amino-7-oxononanoate + holo-[ACP] + CO2. It functions in the pathway cofactor biosynthesis; biotin biosynthesis. Its function is as follows. Catalyzes the decarboxylative condensation of pimeloyl-[acyl-carrier protein] and L-alanine to produce 8-amino-7-oxononanoate (AON), [acyl-carrier protein], and carbon dioxide. This is Putative 8-amino-7-oxononanoate synthase (bioF) from Caulobacter vibrioides (strain ATCC 19089 / CIP 103742 / CB 15) (Caulobacter crescentus).